The chain runs to 88 residues: Small ribosomal subunit protein bS16 (88 aa).

It belongs to the bacterial ribosomal protein bS16 family.

In Mesomycoplasma hyopneumoniae (strain 232) (Mycoplasma hyopneumoniae), this protein is Small ribosomal subunit protein bS16.